The sequence spans 253 residues: Phosphate import ATP-binding protein PstB (253 aa).

An ABC transporter domain is found at 5–248 (IQVRDLNAYY…PSDKRTEDYI (244 aa)). ATP is bound at residue 37 to 44 (GPSGCGKS).

It belongs to the ABC transporter superfamily. Phosphate importer (TC 3.A.1.7) family. As to quaternary structure, the complex is composed of two ATP-binding proteins (PstB), two transmembrane proteins (PstC and PstA) and a solute-binding protein (PstS).

It localises to the cell inner membrane. It catalyses the reaction phosphate(out) + ATP + H2O = ADP + 2 phosphate(in) + H(+). In terms of biological role, part of the ABC transporter complex PstSACB involved in phosphate import. Responsible for energy coupling to the transport system. The polypeptide is Phosphate import ATP-binding protein PstB (Koribacter versatilis (strain Ellin345)).